Reading from the N-terminus, the 140-residue chain is Histone H2B (140 aa).

A disordered region spans residues 1–47 (MPPKAQKTPTTGGKAPAGKAPVEKKEAGKKTAAPSGEKKKRTKTRKE). Lys7 carries the post-translational modification N6-acetyllysine; alternate. Lys7 participates in a covalent cross-link: Glycyl lysine isopeptide (Lys-Gly) (interchain with G-Cter in SUMO); alternate. The residue at position 14 (Lys14) is an N6-acetyllysine. Lys24 carries the post-translational modification N6-acetyllysine; alternate. A Glycyl lysine isopeptide (Lys-Gly) (interchain with G-Cter in SUMO); alternate cross-link involves residue Lys24. Lys25 participates in a covalent cross-link: Glycyl lysine isopeptide (Lys-Gly) (interchain with G-Cter in SUMO). Residue Lys134 forms a Glycyl lysine isopeptide (Lys-Gly) (interchain with G-Cter in ubiquitin) linkage.

This sequence belongs to the histone H2B family. As to quaternary structure, the nucleosome is a histone octamer containing two molecules each of H2A, H2B, H3 and H4 assembled in one H3-H4 heterotetramer and two H2A-H2B heterodimers. The octamer wraps approximately 147 bp of DNA. Monoubiquitinated by BRE1 to form H2BK123ub1. H2BK123ub1 gives a specific tag for epigenetic transcriptional activation and is also prerequisite for H3K4me and H3K79me formation. H2BK123ub1 also modulates the formation of double-strand breaks during meiosis and is a prerequisite for DNA-damage checkpoint activation. In terms of processing, acetylated by GCN5 to form H2BK11ac and H2BK16ac. H2BK16ac can also be formed by ESA1. Acetylation of N-terminal lysines and particularly formation of H2BK11acK16ac has a positive effect on transcription. Post-translationally, sumoylation to form H2BK6su and probably also H2BK16su or H2BK17su, occurs preferentially near the telomeres and represses gene transcription.

The protein resides in the nucleus. It localises to the chromosome. In terms of biological role, core component of nucleosome. Nucleosomes wrap and compact DNA into chromatin, limiting DNA accessibility to the cellular machineries which require DNA as a template. Histones thereby play a central role in transcription regulation, DNA repair, DNA replication and chromosomal stability. DNA accessibility is regulated via a complex set of post-translational modifications of histones, also called histone code, and nucleosome remodeling. The sequence is that of Histone H2B (HTB1) from Phaeosphaeria nodorum (strain SN15 / ATCC MYA-4574 / FGSC 10173) (Glume blotch fungus).